Here is a 352-residue protein sequence, read N- to C-terminus: Pyrimidine monooxygenase RutA (352 aa).

Residues 49-50, asparagine 115, glutamate 124, 140-141, and serine 189 each bind FMN; these read IK and RY.

Belongs to the NtaA/SnaA/DszA monooxygenase family. RutA subfamily.

The catalysed reaction is uracil + FMNH2 + NADH + O2 = (Z)-3-ureidoacrylate + FMN + NAD(+) + H2O + H(+). It catalyses the reaction thymine + FMNH2 + NADH + O2 = (Z)-2-methylureidoacrylate + FMN + NAD(+) + H2O + H(+). Functionally, catalyzes the pyrimidine ring opening between N-3 and C-4 by an unusual flavin hydroperoxide-catalyzed mechanism, adding oxygen atoms in the process to yield ureidoacrylate peracid, that immediately reacts with FMN forming ureidoacrylate and FMN-N(5)-oxide. The FMN-N(5)-oxide reacts spontaneously with NADH to produce FMN. Requires the flavin reductase RutF to regenerate FMN in vivo. This is Pyrimidine monooxygenase RutA from Caulobacter segnis (strain ATCC 21756 / DSM 7131 / JCM 7823 / NBRC 15250 / LMG 17158 / TK0059) (Mycoplana segnis).